Here is a 458-residue protein sequence, read N- to C-terminus: NADH-ubiquinone oxidoreductase chain 4 (458 aa).

Helical transmembrane passes span 22–42 (FFWTAFISSSFLMPFLFFIFT), 63–83 (MISAPLVFLSLWMLPLMALAS), 96–116 (LLYITILIIMQTLLILTFLST), 117–137 (NLMNFYILFESSLIPILLIIF), 150–170 (IYLSFYTLIGSLPLLASLLFL), 194–214 (ILWLGCFSALLIKTPLYGFHL), 224–244 (TIAGSMTLAALMLKLGGYGMI), 257–277 (LSLILISIALWGAVMTSFICL), 284–306 (ALIAYSSVSHMGLMTASIMTLSL), 311–333 (GAFIMMIAHGLSSSALFFLANSN), 350–370 (MLLPLTSLWWLFIILTNLAMP), 391–413 (LTFPFLALTMVITTTYSMSMFML), and 434–454 (LTLFLHLFPMIAIMAYPNMII).

The protein belongs to the complex I subunit 4 family.

Its subcellular location is the mitochondrion membrane. The enzyme catalyses a ubiquinone + NADH + 5 H(+)(in) = a ubiquinol + NAD(+) + 4 H(+)(out). In terms of biological role, core subunit of the mitochondrial membrane respiratory chain NADH dehydrogenase (Complex I) that is believed to belong to the minimal assembly required for catalysis. Complex I functions in the transfer of electrons from NADH to the respiratory chain. The immediate electron acceptor for the enzyme is believed to be ubiquinone. The polypeptide is NADH-ubiquinone oxidoreductase chain 4 (MT-ND4) (Myxine glutinosa (Atlantic hagfish)).